The chain runs to 243 residues: tRNA1(Val) (adenine(37)-N6)-methyltransferase (243 aa).

This sequence belongs to the methyltransferase superfamily. tRNA (adenine-N(6)-)-methyltransferase family.

It localises to the cytoplasm. It carries out the reaction adenosine(37) in tRNA1(Val) + S-adenosyl-L-methionine = N(6)-methyladenosine(37) in tRNA1(Val) + S-adenosyl-L-homocysteine + H(+). Specifically methylates the adenine in position 37 of tRNA(1)(Val) (anticodon cmo5UAC). In Shewanella woodyi (strain ATCC 51908 / MS32), this protein is tRNA1(Val) (adenine(37)-N6)-methyltransferase.